The chain runs to 400 residues: MAKEKFVRTKPHMNVGTIGHIDHGKTTLTAAITKYCSLFGWADYTPYEMIDKAPEERARGITINITHVEYQTEKRHYAHIDCPGHADYIKNMITGAAQMDGAILVVAATDGPMPQTREHVLLARQVNVPAMIVFINKVDMVDDPELVDLVEMEVRDLLSKYEFPGDELPVIRGSALKAVEAPNDPNHPDLKAIKELLDAMDSYFPDPVREVDKPFLMPVEDVFTITGRGTVVTGRIERGVIKPGVEAEIIGMSYETKKTVITSVEMFRKELDEAMAGDNVGCLLRGVDKDEVERGQVIAKPGSITPHKKFKANIYVLKKEEGGRHTPFTKGYKPQFYIRTADVTGEIVDLPAGVEMVMPGDNVEMTIELIYPVAIEKGMRFAVREGGRTVGAGVVSEIIE.

Positions 10 to 208 constitute a tr-type G domain; that stretch reads KPHMNVGTIG…AMDSYFPDPV (199 aa). A G1 region spans residues 19-26; the sequence is GHIDHGKT. Residue 19 to 26 coordinates GTP; the sequence is GHIDHGKT. T26 is a Mg(2+) binding site. The segment at 60-64 is G2; the sequence is GITIN. The G3 stretch occupies residues 81–84; the sequence is DCPG. GTP-binding positions include 81 to 85 and 136 to 139; these read DCPGH and NKVD. The segment at 136–139 is G4; the sequence is NKVD. The interval 174–176 is G5; sequence SAL.

It belongs to the TRAFAC class translation factor GTPase superfamily. Classic translation factor GTPase family. EF-Tu/EF-1A subfamily. Monomer.

Its subcellular location is the cytoplasm. The enzyme catalyses GTP + H2O = GDP + phosphate + H(+). In terms of biological role, GTP hydrolase that promotes the GTP-dependent binding of aminoacyl-tRNA to the A-site of ribosomes during protein biosynthesis. This chain is Elongation factor Tu, found in Fervidobacterium nodosum (strain ATCC 35602 / DSM 5306 / Rt17-B1).